The chain runs to 322 residues: o-succinylbenzoate synthase (322 aa).

Residue Lys-136 is the Proton donor of the active site. Residues Asp-165, Glu-194, and Asp-219 each contribute to the Mg(2+) site. The active-site Proton acceptor is the Lys-243.

It belongs to the mandelate racemase/muconate lactonizing enzyme family. MenC type 1 subfamily. In terms of assembly, monomer. Requires a divalent metal cation as cofactor.

The enzyme catalyses (1R,6R)-6-hydroxy-2-succinyl-cyclohexa-2,4-diene-1-carboxylate = 2-succinylbenzoate + H2O. Its pathway is quinol/quinone metabolism; 1,4-dihydroxy-2-naphthoate biosynthesis; 1,4-dihydroxy-2-naphthoate from chorismate: step 4/7. It functions in the pathway cofactor biosynthesis; phylloquinone biosynthesis. In terms of biological role, converts 2-succinyl-6-hydroxy-2,4-cyclohexadiene-1-carboxylate (SHCHC) to 2-succinylbenzoate (OSB). Does not show N-succinylamino acid racemase (NSAR) activity with N-succinyl-L-phenylglycine as substrate. The polypeptide is o-succinylbenzoate synthase (Thermosynechococcus vestitus (strain NIES-2133 / IAM M-273 / BP-1)).